The sequence spans 279 residues: Tryptophan 2,3-dioxygenase (279 aa).

Substrate contacts are provided by residues 48 to 52 (FIVIH), Tyr110, and Arg114. His237 lines the heme pocket. Thr251 lines the substrate pocket.

It belongs to the tryptophan 2,3-dioxygenase family. Homotetramer. Heme serves as cofactor.

It catalyses the reaction L-tryptophan + O2 = N-formyl-L-kynurenine. Its pathway is amino-acid degradation; L-tryptophan degradation via kynurenine pathway; L-kynurenine from L-tryptophan: step 1/2. In terms of biological role, heme-dependent dioxygenase that catalyzes the oxidative cleavage of the L-tryptophan (L-Trp) pyrrole ring and converts L-tryptophan to N-formyl-L-kynurenine. Catalyzes the oxidative cleavage of the indole moiety. In Bacillus anthracis, this protein is Tryptophan 2,3-dioxygenase.